A 370-amino-acid polypeptide reads, in one-letter code: Coiled-coil domain-containing protein 89 (370 aa).

Residues 1-38 (MPQEESAPRMDTPSSEEPLDKQNRKLEDQEEEMGFKEL) are disordered. Threonine 12 carries the phosphothreonine modification. Positions 18–38 (PLDKQNRKLEDQEEEMGFKEL) are enriched in basic and acidic residues. A coiled-coil region spans residues 19-346 (LDKQNRKLED…YDELRLQSEA (328 aa)).

The protein belongs to the CCDC89 family. In terms of assembly, interacts with HEY1.

The protein resides in the cytoplasm. It localises to the nucleus. In Bos taurus (Bovine), this protein is Coiled-coil domain-containing protein 89.